Here is a 294-residue protein sequence, read N- to C-terminus: Tyrosine-protein phosphatase (294 aa).

The first 24 residues, 1 to 24, serve as a signal peptide directing secretion; the sequence is MKTHHANLALALMLGLSSSATAVA. The active-site Phosphocysteine intermediate is Cys-182. 2 stretches are compositionally biased toward basic and acidic residues: residues 221 to 231 and 238 to 247; these read QPKDSDERADH and PGDRPQDGGH. The interval 221 to 252 is disordered; that stretch reads QPKDSDERADHGAGQAEPGDRPQDGGHGRYRA.

It belongs to the protein-tyrosine phosphatase family. In terms of assembly, monomer.

It carries out the reaction O-phospho-L-tyrosyl-[protein] + H2O = L-tyrosyl-[protein] + phosphate. The chain is Tyrosine-protein phosphatase (iphP) from Nostoc commune.